The primary structure comprises 490 residues: ATP synthase subunit beta, chloroplastic (490 aa).

The residue at position 6 (threonine 6) is a Phosphothreonine. Serine 13 carries the post-translational modification Phosphoserine. 172–179 (GGAGVGKT) serves as a coordination point for ATP.

This sequence belongs to the ATPase alpha/beta chains family. F-type ATPases have 2 components, CF(1) - the catalytic core - and CF(0) - the membrane proton channel. CF(1) has five subunits: alpha(3), beta(3), gamma(1), delta(1), epsilon(1). CF(0) has four main subunits: a(1), b(1), b'(1) and c(9-12).

It is found in the plastid. The protein localises to the chloroplast thylakoid membrane. It catalyses the reaction ATP + H2O + 4 H(+)(in) = ADP + phosphate + 5 H(+)(out). Its function is as follows. Produces ATP from ADP in the presence of a proton gradient across the membrane. The catalytic sites are hosted primarily by the beta subunits. This is ATP synthase subunit beta, chloroplastic from Aethionema cordifolium (Lebanon stonecress).